The following is a 328-amino-acid chain: tRNA uridine(34) hydroxylase (328 aa).

The region spanning 130–224 (LDKDTVVLDT…YGKDPEVQGE (95 aa)) is the Rhodanese domain. The active-site Cysteine persulfide intermediate is the cysteine 184.

This sequence belongs to the TrhO family.

The catalysed reaction is uridine(34) in tRNA + AH2 + O2 = 5-hydroxyuridine(34) in tRNA + A + H2O. Catalyzes oxygen-dependent 5-hydroxyuridine (ho5U) modification at position 34 in tRNAs. In Streptococcus pneumoniae serotype 19F (strain G54), this protein is tRNA uridine(34) hydroxylase.